A 239-amino-acid chain; its full sequence is Probable transcriptional regulatory protein YeeI (239 aa).

Belongs to the TACO1 family. YeeN subfamily.

The protein localises to the cytoplasm. In Bacillus subtilis (strain 168), this protein is Probable transcriptional regulatory protein YeeI (yeeI).